The sequence spans 142 residues: Large ribosomal subunit protein uL11 (142 aa).

This sequence belongs to the universal ribosomal protein uL11 family. In terms of assembly, part of the ribosomal stalk of the 50S ribosomal subunit. Interacts with L10 and the large rRNA to form the base of the stalk. L10 forms an elongated spine to which L12 dimers bind in a sequential fashion forming a multimeric L10(L12)X complex. In terms of processing, one or more lysine residues are methylated.

In terms of biological role, forms part of the ribosomal stalk which helps the ribosome interact with GTP-bound translation factors. The protein is Large ribosomal subunit protein uL11 of Xanthomonas campestris pv. campestris (strain B100).